Here is a 290-residue protein sequence, read N- to C-terminus: GTPase Era (290 aa).

An Era-type G domain is found at 2–167 (KSGFVSIVGR…LDELVKYLPE (166 aa)). The interval 10–17 (GRTNAGKS) is G1. 10 to 17 (GRTNAGKS) lines the GTP pocket. Positions 36–40 (NATRR) are G2. The G3 stretch occupies residues 57-60 (DTPG). GTP is bound by residues 57-61 (DTPGL) and 116-119 (NKVD). A G4 region spans residues 116–119 (NKVD). Positions 146-148 (YSI) are G5. In terms of domain architecture, KH type-2 spans 194–274 (IYENLSDEIP…MLKLFVQLEK (81 aa)).

This sequence belongs to the TRAFAC class TrmE-Era-EngA-EngB-Septin-like GTPase superfamily. Era GTPase family. Monomer.

It localises to the cytoplasm. The protein localises to the cell inner membrane. Functionally, an essential GTPase that binds both GDP and GTP, with rapid nucleotide exchange. Plays a role in 16S rRNA processing and 30S ribosomal subunit biogenesis and possibly also in cell cycle regulation and energy metabolism. The chain is GTPase Era from Campylobacter lari (strain RM2100 / D67 / ATCC BAA-1060).